The primary structure comprises 820 residues: DNA mismatch repair protein MutS (820 aa).

618–625 contributes to the ATP binding site; that stretch reads GPNMAGKS.

Belongs to the DNA mismatch repair MutS family.

In terms of biological role, this protein is involved in the repair of mismatches in DNA. It is possible that it carries out the mismatch recognition step. This protein has a weak ATPase activity. This chain is DNA mismatch repair protein MutS, found in Chlamydia trachomatis serovar L2b (strain UCH-1/proctitis).